The primary structure comprises 209 residues: T-cell surface glycoprotein CD8 beta chain (209 aa).

A signal peptide spans 1–21 (MRPRMWLLLSAQLAALHGNSV). The Ig-like V-type domain occupies 22 to 131 (LQQTPAYIMV…TLIFGTGTQL (110 aa)). Residues 22–169 (LQQTPAYIMV…ETRKGPLCSP (148 aa)) lie on the Extracellular side of the membrane. Cysteines 41 and 115 form a disulfide. An N-linked (GlcNAc...) asparagine glycan is attached at N101. Residues 170–190 (ITLSLLVAGILVLLVSLGVAI) form a helical membrane-spanning segment. Residues 191–209 (HLYCRQRRARLRFMKQFYK) lie on the Cytoplasmic side of the membrane.

As to quaternary structure, forms disulfide-linked heterodimers with CD8A at the cell surface. Interacts with CD3D; this interaction couples TCR-CD3 with CD8. Interacts with LCK. In terms of processing, phosphorylated as a consequence of T-cell activation. Post-translationally, palmitoylated at the cytoplasmic tail and thereby targets the heterodimer CD8A/CD8B to lipid rafts unlike CD8A homodimers.

The protein localises to the cell membrane. Integral membrane glycoprotein that plays an essential role in the immune response and serves multiple functions in responses against both external and internal offenses. In T-cells, functions primarily as a coreceptor for MHC class I molecule:peptide complex. The antigens presented by class I peptides are derived from cytosolic proteins while class II derived from extracellular proteins. Interacts simultaneously with the T-cell receptor (TCR) and the MHC class I proteins presented by antigen presenting cells (APCs). In turn, recruits the Src kinase LCK to the vicinity of the TCR-CD3 complex. A palmitoylation site in the cytoplasmic tail of CD8B chain contributes to partitioning of CD8 into the plasma membrane lipid rafts where signaling proteins are enriched. Once LCK recruited, it initiates different intracellular signaling pathways by phosphorylating various substrates ultimately leading to lymphokine production, motility, adhesion and activation of cytotoxic T-lymphocytes (CTLs). Additionally, plays a critical role in thymic selection of CD8+ T-cells. The chain is T-cell surface glycoprotein CD8 beta chain (CD8B) from Saimiri sciureus (Common squirrel monkey).